Here is a 398-residue protein sequence, read N- to C-terminus: Yellow-related salivary protein SP04 (398 aa).

The N-terminal stretch at Met1–Gly18 is a signal peptide. The tract at residues Thr73–Gly94 is disordered. The segment covering Thr75–Arg85 has biased composition (basic and acidic residues).

The protein belongs to the major royal jelly protein family. In terms of tissue distribution, female salivary gland (at protein level).

The protein localises to the secreted. Its function is as follows. Probably modulates blood feeding of sand flies on vertebrate species by binding and sequestering different mediators involved in the host response. Binds biogenic amines. Binds serotonin with high affinity. Binds histamine with low affinity. This Phlebotomus argentipes (Phlebotomine sand fly) protein is Yellow-related salivary protein SP04.